A 397-amino-acid chain; its full sequence is Acetate kinase (397 aa).

Residue Asn-8 coordinates Mg(2+). Lys-15 contributes to the ATP binding site. A substrate-binding site is contributed by Arg-89. The active-site Proton donor/acceptor is Asp-146. Residues 206–210, 281–283, and 329–333 contribute to the ATP site; these read HLGNG, DLR, and GIGEN. Glu-382 serves as a coordination point for Mg(2+).

Belongs to the acetokinase family. As to quaternary structure, homodimer. Mg(2+) is required as a cofactor. The cofactor is Mn(2+).

The protein localises to the cytoplasm. It catalyses the reaction acetate + ATP = acetyl phosphate + ADP. The protein operates within metabolic intermediate biosynthesis; acetyl-CoA biosynthesis; acetyl-CoA from acetate: step 1/2. Functionally, catalyzes the formation of acetyl phosphate from acetate and ATP. Can also catalyze the reverse reaction. The protein is Acetate kinase of Bacillus cytotoxicus (strain DSM 22905 / CIP 110041 / 391-98 / NVH 391-98).